Consider the following 293-residue polypeptide: Cbb3-type cytochrome c oxidase subunit FixP (293 aa).

Positions 1–11 (MSTSHESHHAP) are enriched in basic and acidic residues. Residues 1-25 (MSTSHESHHAPVDGAGGPSTTGHEW) form a disordered region. A helical transmembrane segment spans residues 43–63 (FYATIIWAFGYWVAYPAWPLV). Cytochrome c domains lie at 114–201 (LARA…RSLS) and 209–290 (PAAK…HTLG). Cysteine 127, cysteine 130, histidine 131, methionine 178, cysteine 222, cysteine 225, histidine 226, and methionine 267 together coordinate heme c.

The protein belongs to the CcoP / FixP family. As to quaternary structure, component of the cbb3-type cytochrome c oxidase at least composed of FixN, FixO, FixQ and FixP. It depends on heme c as a cofactor.

The protein localises to the cell inner membrane. Its pathway is energy metabolism; oxidative phosphorylation. C-type cytochrome. Part of the cbb3-type cytochrome c oxidase complex. FixP subunit is required for transferring electrons from donor cytochrome c via its heme groups to FixO subunit. From there, electrons are shuttled to the catalytic binuclear center of FixN subunit where oxygen reduction takes place. The complex also functions as a proton pump. This chain is Cbb3-type cytochrome c oxidase subunit FixP, found in Azorhizobium caulinodans (strain ATCC 43989 / DSM 5975 / JCM 20966 / LMG 6465 / NBRC 14845 / NCIMB 13405 / ORS 571).